Consider the following 319-residue polypeptide: MNNTKKRGVLLVNLGTPEEATAPAVKRFLSQFLHDQRVVDMTRWLWCPILHGIILPIRSPKVAKLYQTVWMKEGSPLMVYSKRQQVELQAKLNCPVEIGMTYGTPSVLDGVNKLQAQGVDEICVLPLYPQYSGTTTGAAYDALAHALRKVAVVPSIQFIRDYHDHPLYIKALAESVRQSWQVQGKGDYLLCSYHGIPQRYADNGDVYPLHCEMTTELLRLELGLDKSQIGTTYQSRFGREEWLQPYTDKTLESLPAKGIKSLDVITPAFSVDCLETLEEISEQGQESFLHAGGEQYRFIPCLNDAPSHIEMMARLVTER.

Fe cation-binding residues include His194 and Glu275.

It belongs to the ferrochelatase family.

The protein resides in the cytoplasm. The catalysed reaction is heme b + 2 H(+) = protoporphyrin IX + Fe(2+). It functions in the pathway porphyrin-containing compound metabolism; protoheme biosynthesis; protoheme from protoporphyrin-IX: step 1/1. Catalyzes the ferrous insertion into protoporphyrin IX. In Vibrio vulnificus (strain CMCP6), this protein is Ferrochelatase.